The following is a 509-amino-acid chain: Cytochrome P450 monooxygenase fumoA (509 aa).

A helical transmembrane segment spans residues 5–27 (LANLNFPYLILSACLSAILLSRF). Residues Asn317, Asn369, and Asn378 are each glycosylated (N-linked (GlcNAc...) asparagine). Heme is bound at residue Cys456. A glycan (N-linked (GlcNAc...) asparagine) is linked at Asn464.

The protein belongs to the cytochrome P450 family. The cofactor is heme.

The protein localises to the membrane. The protein operates within secondary metabolite biosynthesis. In terms of biological role, cytochrome P450 monooxygenase; part of the gene cluster that mediates the biosynthesis of fumosorinone, a 2-pyridone alkaloid that acts as an inhibitor of protein tyrosine phosphatase 1B which is implicated asa negative regulator of insulin receptor signaling and a potential drug target for the treatment of type II diabetes and other associated metabolic syndromes. The polyketide-amino acid backbone of fumosorinone is first assembled by the PKS-NRPS hybrid fumoS. The PKS modules condense one acetyl-CoA starter unit with 7 malonyl-CoA units, programmed C-methylations occurring after the first 3 and the sixth extensions, and cycles of full reduction occurring after the first 2 extensions. Because fumoS lacks a designated enoyl reductase (ER) domain, the required activity is provided the enoyl reductase fumoC. Upon formation of the polyketide backbone on the thiotemplate, the polyketide is transferred to the NRPS module and linked to tyrosine to produce the acyltetramic acid intermediate called prefumosorinone A. The cytochrome P450 monooxygenase fumoA then probably catalyzes an unprecedented oxidative ring expansion of prefumosorinone A to form prefumosorinone B which contains the 2-pyridone core of fumosorinone. The cytochrome P450 monooxygenase fumoB might hydroxylate the nitrogen of prefumosorinone B, but not the acyltetramic acid prefumosorinone A, to form fumosorinone. The sequence is that of Cytochrome P450 monooxygenase fumoA from Cordyceps fumosorosea (strain ARSEF 2679) (Isaria fumosorosea).